Reading from the N-terminus, the 433-residue chain is MKIANTFIKRGAAGGLDLSQAPGVTLTLAERRRSRQRLDLDEGRGELGMAIERGQTLRDGDVLVAEDGTYVVVRAALEDVARVTAATPWQLARAAYHLGNRHVLLEIAERHLQFEYDAVLIDMLAQLGGVTATRLRAVFEPDVGAYGGGHRHGHDESFGDDYALAQAAYHAHEHTPMRTPMPADTATFIPVMATAASTASMTPSLDAGQLAALLHLSSPALPIGGFSYSQGLEAAIELGLVHDEASTLAWIESQLVTVMARAEAPLWCLLFEAWRAGDDAAAHGWNQWFHASRETRELRQETEQMGRSLARLAQELGWGTAATRAAVAALRPATLPAVHACACAMWALPREAGLGAYVFSWLENQVAAAIKGVPLGQMAGQRMLERLRAGLPAVLADARARAGATPPRLDTFAPQYALVSARHETQFSRLFRS.

The segment at 1-200 (MKIANTFIKR…VMATAASTAS (200 aa)) is urease accessory protein UreE. The urease accessory protein UreF stretch occupies residues 200 to 433 (SMTPSLDAGQ…ETQFSRLFRS (234 aa)).

The protein in the N-terminal section; belongs to the UreE family. In the C-terminal section; belongs to the UreF family. UreD, UreF and UreG form a complex that acts as a GTP-hydrolysis-dependent molecular chaperone, activating the urease apoprotein by helping to assemble the nickel containing metallocenter of UreC. The UreE protein probably delivers the nickel.

The protein resides in the cytoplasm. Involved in urease metallocenter assembly. Binds nickel. Probably functions as a nickel donor during metallocenter assembly. In terms of biological role, required for maturation of urease via the functional incorporation of the urease nickel metallocenter. The protein is Bifunctional urease accessory protein UreEF (ureEF) of Bordetella bronchiseptica (Alcaligenes bronchisepticus).